A 112-amino-acid polypeptide reads, in one-letter code: uncharacterized protein (112 aa).

To Buchnera BU585.

This is an uncharacterized protein from Buchnera aphidicola subsp. Schizaphis graminum (strain Sg).